The following is an 846-amino-acid chain: Neurotactin (846 aa).

The disordered stretch occupies residues 1 to 222 (MGELEEKETP…EDASDAPPKR (222 aa)). The Cytoplasmic portion of the chain corresponds to 1–324 (MGELEEKETP…LRGYKCSVDD (324 aa)). Over residues 11 to 20 (PTETTAAQQE) the composition is skewed to low complexity. Residues 23-42 (EEPKETDKMLDKKEDAKEKT) are compositionally biased toward basic and acidic residues. Phosphothreonine; by PKC is present on threonine 28. The residue at position 42 (threonine 42) is a Phosphothreonine. Serine 44 carries the post-translational modification Phosphoserine. Phosphothreonine is present on threonine 47. Residues serine 48 and serine 52 each carry the phosphoserine modification. Positions 63-74 (AEKKIDDAELAK) are enriched in basic and acidic residues. Serine 75 is subject to Phosphoserine; by PKC. Residue serine 77 is modified to Phosphoserine. 4 stretches are compositionally biased toward basic and acidic residues: residues 95–111 (DSAD…EVKP), 141–155 (LLEK…KEAN), 163–178 (GKDE…ERLR), and 185–205 (PSAE…KSEA). The residue at position 103 (serine 103) is a Phosphoserine; by PKC. Serine 169 carries the phosphoserine; by PKC modification. Phosphoserine is present on residues serine 186 and serine 203. Threonine 206 is modified (phosphothreonine). A Phosphoserine modification is found at serine 256. The residue at position 259 (threonine 259) is a Phosphothreonine. Position 263 is a phosphoserine (serine 263). Position 269 is a phosphothreonine (threonine 269). The helical; Signal-anchor for type II membrane protein transmembrane segment at 325-346 (ALIVFGILLFVLLLGVIGYVLT) threads the bilayer. Residues 347-846 (HETLTSPPLR…DIVPRYARVD (500 aa)) lie on the Extracellular side of the membrane. N-linked (GlcNAc...) asparagine glycans are attached at residues asparagine 410, asparagine 417, and asparagine 428. 2 cysteine pairs are disulfide-bonded: cysteine 422–cysteine 437 and cysteine 600–cysteine 605. Residues asparagine 636, asparagine 691, and asparagine 720 are each glycosylated (N-linked (GlcNAc...) asparagine). Cysteine 738 and cysteine 830 are joined by a disulfide.

The protein in the C-terminal section; belongs to the type-B carboxylesterase/lipase family. Late in embryogenesis, expression is restricted to cells of the peripheral and central nervous system undergoing proliferation and differentiation. Also expressed in larval CNS, mesoderm and imaginal disks.

The protein resides in the membrane. May mediate or modulate cell adhesion between embryonic cells during development. In Drosophila melanogaster (Fruit fly), this protein is Neurotactin (Nrt).